Here is a 274-residue protein sequence, read N- to C-terminus: NH(3)-dependent NAD(+) synthetase (274 aa).

Gly-46–Ser-53 lines the ATP pocket. Asp-52 is a binding site for Mg(2+). Arg-140 is a binding site for deamido-NAD(+). Residue Thr-160 coordinates ATP. Position 165 (Glu-165) interacts with Mg(2+). Lys-173 and Asp-180 together coordinate deamido-NAD(+). Positions 189 and 211 each coordinate ATP. His-260–Lys-261 contacts deamido-NAD(+).

Belongs to the NAD synthetase family. Homodimer.

It catalyses the reaction deamido-NAD(+) + NH4(+) + ATP = AMP + diphosphate + NAD(+) + H(+). It functions in the pathway cofactor biosynthesis; NAD(+) biosynthesis; NAD(+) from deamido-NAD(+) (ammonia route): step 1/1. In terms of biological role, catalyzes the ATP-dependent amidation of deamido-NAD to form NAD. Uses ammonia as a nitrogen source. The protein is NH(3)-dependent NAD(+) synthetase of Streptococcus sanguinis (strain SK36).